We begin with the raw amino-acid sequence, 361 residues long: MIRIPVALPMDSYDICIDEGGLERLGEYLAELGKVNRALVVSNPVVLRHYGARVVRSLNAAGFETASVTVPAGERHKHLRSVERIYQAALEHRLERSSLIVALGGGVVGDMAGFAASTWLRGIRVAQVPTTLLAMVDAAIGGKTGVNHPLGKNLIGTFHQPCLVLIDPQVLGTLPPRETRAAMAEVIKYGVIWDGDLFKRLEQLPSLQRPDARTLTTLLVRSCQAKAEVVVRDEREGGLRAILNYGHTVGHALESATGYRRYLHGEGVALGMAAAGRVAVALDLWSPEELRRQEALIIKARLPVRWKSDIASEALLLRMQSDKKVEAGKVRFVLPEAIGRVHTGVEVPTEVLRRVLDTLRG.

NAD(+)-binding positions include 106–110 (GVVGD), 130–131 (TT), Lys143, and Lys152. Residues Glu185, His247, and His264 each coordinate Zn(2+).

Belongs to the sugar phosphate cyclases superfamily. Dehydroquinate synthase family. NAD(+) is required as a cofactor. Co(2+) serves as cofactor. It depends on Zn(2+) as a cofactor.

Its subcellular location is the cytoplasm. It catalyses the reaction 7-phospho-2-dehydro-3-deoxy-D-arabino-heptonate = 3-dehydroquinate + phosphate. Its pathway is metabolic intermediate biosynthesis; chorismate biosynthesis; chorismate from D-erythrose 4-phosphate and phosphoenolpyruvate: step 2/7. In terms of biological role, catalyzes the conversion of 3-deoxy-D-arabino-heptulosonate 7-phosphate (DAHP) to dehydroquinate (DHQ). This chain is 3-dehydroquinate synthase, found in Gloeobacter violaceus (strain ATCC 29082 / PCC 7421).